The sequence spans 814 residues: Protein ADP-ribosyltransferase PARP3 (814 aa).

2 stretches are compositionally biased toward basic and acidic residues: residues 1-19 (MKVHETRSHAHMSGDEQKG) and 27-48 (EGKLPESEQSQKKAKPENDDGR). The tract at residues 1–52 (MKVHETRSHAHMSGDEQKGNLRKHKAEGKLPESEQSQKKAKPENDDGRSVNG) is disordered. One can recognise a PADR1 zinc-binding domain in the interval 38 to 186 (KKAKPENDDG…KRELGSADKP (149 aa)). The zinc ribbon stretch occupies residues 105 to 150 (GALAKCPLCGGTLICDNEKRFVCGGEISEWCSCVFSTKDPPRKEEP). Zn(2+)-binding residues include Cys110, Cys113, Cys127, and Cys137. 2 TPR repeats span residues 182 to 215 (SADKPFVGMMISLMGRLTRTHQYWKKKIERNGGK) and 277 to 310 (DLSVEGKGIPWDKQDPSEEAIESFSAELKMYGKR). In terms of domain architecture, BRCT spans 187-274 (FVGMMISLMG…EAQPLEAYDV (88 aa)). The 101-residue stretch at 322–422 (GGKIFEKDGL…KKIQKKPHKF (101 aa)) folds into the WGR domain. The 120-residue stretch at 449 to 568 (HCKLDSFVAN…DINTASRLIG (120 aa)) folds into the PARP alpha-helical domain. Positions 577–808 (DPLSDRYKKL…VKYEEKGTEI (232 aa)) constitute a PARP catalytic domain.

Belongs to the ARTD/PARP family.

The protein localises to the nucleus. The catalysed reaction is L-aspartyl-[protein] + NAD(+) = 4-O-(ADP-D-ribosyl)-L-aspartyl-[protein] + nicotinamide. The enzyme catalyses L-glutamyl-[protein] + NAD(+) = 5-O-(ADP-D-ribosyl)-L-glutamyl-[protein] + nicotinamide. In terms of biological role, involved in the base excision repair (BER) pathway, by catalyzing the poly(ADP-ribosyl)ation of a limited number of acceptor proteins involved in chromatin architecture and in DNA metabolism. This modification follows DNA damages and appears as an obligatory step in a detection/signaling pathway leading to the reparation of DNA strand breaks. The chain is Protein ADP-ribosyltransferase PARP3 (PARP3) from Arabidopsis thaliana (Mouse-ear cress).